Here is a 129-residue protein sequence, read N- to C-terminus: Glycine cleavage system H protein (129 aa).

One can recognise a Lipoyl-binding domain in the interval 24–106 (SYTVGISEHA…FGDGWFFRVM (83 aa)). Lys65 carries the post-translational modification N6-lipoyllysine.

It belongs to the GcvH family. The glycine cleavage system is composed of four proteins: P, T, L and H. The cofactor is (R)-lipoate.

Its function is as follows. The glycine cleavage system catalyzes the degradation of glycine. The H protein shuttles the methylamine group of glycine from the P protein to the T protein. The chain is Glycine cleavage system H protein from Shewanella woodyi (strain ATCC 51908 / MS32).